Reading from the N-terminus, the 111-residue chain is Universal stress protein B (111 aa).

The next 2 helical transmembrane spans lie at 1-21 and 90-110; these read MISTIALFWALCVVCVVNMAR and FILTSALCGLVVVSLIALMIW.

It belongs to the universal stress protein B family.

It localises to the cell inner membrane. The chain is Universal stress protein B from Klebsiella pneumoniae (strain 342).